Consider the following 178-residue polypeptide: Adenine phosphoribosyltransferase (178 aa).

This sequence belongs to the purine/pyrimidine phosphoribosyltransferase family. Homodimer.

The protein localises to the cytoplasm. The enzyme catalyses AMP + diphosphate = 5-phospho-alpha-D-ribose 1-diphosphate + adenine. It participates in purine metabolism; AMP biosynthesis via salvage pathway; AMP from adenine: step 1/1. In terms of biological role, catalyzes a salvage reaction resulting in the formation of AMP, that is energically less costly than de novo synthesis. In Mycoplasmoides gallisepticum (strain R(low / passage 15 / clone 2)) (Mycoplasma gallisepticum), this protein is Adenine phosphoribosyltransferase.